The following is a 153-amino-acid chain: Holo-[acyl-carrier-protein] synthase (153 aa).

Residues aspartate 24 and glutamate 78 each coordinate Mg(2+).

It belongs to the P-Pant transferase superfamily. AcpS family. It depends on Mg(2+) as a cofactor.

It is found in the cytoplasm. The enzyme catalyses apo-[ACP] + CoA = holo-[ACP] + adenosine 3',5'-bisphosphate + H(+). In terms of biological role, transfers the 4'-phosphopantetheine moiety from coenzyme A to a Ser of acyl-carrier-protein. This chain is Holo-[acyl-carrier-protein] synthase, found in Bordetella parapertussis (strain 12822 / ATCC BAA-587 / NCTC 13253).